A 392-amino-acid chain; its full sequence is MVDTMNARNTQFTKAFHALKQNAGSHSPSMEDLKKMFPTLEIKIDACYLSNPYASELVLDYIDRELIQTNAYKKVLTHYPSQQRSLQKVMAESLHVKPENIFIGNGATEIIQMLLQQEEVQKVALMIPTFSSYYEFVGKGCEVVYFPLNERDDYSFDADKYCQFIENEQPDTVVLINPNNPNGAYLSLEKMHILLKRLAFVPRIIIDESFIHFAYEDEALTCLSSTVLFDMYPNVIIVKSLSKDFGIAGVRLGYALMDSRKIDALLEHGFLWNINGIGEYCLRLFVREDFLKRYEEARKQYIKEMCRFKEALLGIENVYVYPSMANFVMLKLPSRIKASFVISALLVEYGIYVRTMADKIGVEGECIRIAGRTREENNCIVMALKSILKDSK.

The tract at residues 22–29 is required for catalytic activity; the sequence is NAGSHSPS. Asparagine 180 provides a ligand contact to O-phospho-L-serine. Lysine 243 bears the N6-(pyridoxal phosphate)lysine mark. Arginine 354 and arginine 368 together coordinate O-phospho-L-serine.

It belongs to the class-II pyridoxal-phosphate-dependent aminotransferase family. In terms of assembly, homodimer. Requires pyridoxal 5'-phosphate as cofactor.

The catalysed reaction is O-phospho-L-serine + H(+) = phosphoethanolamine + CO2. The protein operates within cofactor biosynthesis. Its function is as follows. Pyridoxal phosphate (PLP)-dependent decarboxylase involved in the biosynthesis of norcobamides, cofactors in the tetrachloroethene reductive dehalogenase PceA of S.multivorans. Catalyzes the decarboxylation of L-serine O-phosphate to ethanolamine O-phosphate, the precursor for the linkage between the nucleotide loop and the corrin ring in norcobamide. Less active with L-threonine phosphate. No activity with L-serine or L-threonine. Has no aminotransferase activity as no production of L-glutamate with L-histidinol phosphate and 2-oxoglutarate as substrates. Complements growth defects in the S.enterica cobD deletion mutant, but of the cobamides, the norpseudo-vitamin B12 (norpseudo-B12) rather than the pseudo-B12 is produced in the mutant. However, addition of L-threonine phosphate to the culture minimal medium of the mutant results in formation of also the pseudo-B12, indicating the dual substrate specificity of this enzyme. The sequence is that of L-serine phosphate decarboxylase from Sulfurospirillum multivorans (strain DM 12446 / JCM 15788 / NBRC 109480).